Consider the following 187-residue polypeptide: Calcium and integrin-binding family member 3 (187 aa).

EF-hand domains lie at 66 to 101, 103 to 138, and 144 to 179; these read KDNP…MSEM, PRDL…LTRG, and EVSL…APDF. Residues Asp116, Asn118, Asp120, Tyr122, Asp127, Asp157, Asp159, Asp161, Arg163, and Asp168 each contribute to the Ca(2+) site.

In terms of assembly, monomer and homodimer. Interacts with ITGA2B (via C-terminus cytoplasmic tail region); the interaction is stabilized/increased in a calcium and magnesium-dependent manner. Interacts with TMC1.

In terms of biological role, acts a an auxiliary subunit of the sensory mechanoelectrical transduction (MET) channel in hair cells. Plays a role in regulating hair cell MET channel localization and function. This Homo sapiens (Human) protein is Calcium and integrin-binding family member 3 (CIB3).